The chain runs to 245 residues: Thiopurine S-methyltransferase (245 aa).

S14 is subject to Phosphoserine. W29–F40 provides a ligand contact to S-adenosyl-L-methionine. F40 contributes to the substrate binding site. Position 58 is an N6-acetyllysine (K58). S-adenosyl-L-methionine-binding positions include L69, E90, S134 to I135, and R152.

This sequence belongs to the class I-like SAM-binding methyltransferase superfamily. TPMT family. Monomer.

It localises to the cytoplasm. The catalysed reaction is S-adenosyl-L-methionine + a thiopurine = S-adenosyl-L-homocysteine + a thiopurine S-methylether.. This chain is Thiopurine S-methyltransferase (TPMT), found in Pongo pygmaeus (Bornean orangutan).